The chain runs to 430 residues: DNA polymerase IV 1 (430 aa).

The UmuC domain occupies 45–225 (LAHIDCDAFY…KPVTLIWGVG (181 aa)). The Mg(2+) site is built by D49 and D142. The active site involves E143.

Belongs to the DNA polymerase type-Y family. In terms of assembly, monomer. The cofactor is Mg(2+).

The protein localises to the cytoplasm. It catalyses the reaction DNA(n) + a 2'-deoxyribonucleoside 5'-triphosphate = DNA(n+1) + diphosphate. Poorly processive, error-prone DNA polymerase involved in untargeted mutagenesis. Copies undamaged DNA at stalled replication forks, which arise in vivo from mismatched or misaligned primer ends. These misaligned primers can be extended by PolIV. Exhibits no 3'-5' exonuclease (proofreading) activity. May be involved in translesional synthesis, in conjunction with the beta clamp from PolIII. The chain is DNA polymerase IV 1 (dinB1) from Rhizobium meliloti (strain 1021) (Ensifer meliloti).